Reading from the N-terminus, the 334-residue chain is MLTYAQAGVDDEKTSRALKSIISLAKGTFEFRRGKLGEPAEDLGHYAALMDFGDFYLAITTDGVGTKVLVAEAVGKFDTIGIDMIAMNVNDLLCVGAEPVALVDYLAVKEPDERVFEGIAQGLYEGARQAGIAIVGGETAVMPDLINGFDLAGTAIGVVEKRKVITGKKIRPGDAVIGIKSSGIHSNGLTLARKLLIPKYGLDYEYEGKKLWEWLLEPTRIYVKAVLELIENVKVHGLAHITGGGLLNLKRLTSFGFSIEMPPIEGIFRLIYENGVPLEEMFRVFNMGVGMVAVVPREEKEEALQLLNRHFESFELGKVVGEPGIRVENYGIKL.

Belongs to the AIR synthase family.

Its subcellular location is the cytoplasm. The enzyme catalyses 2-formamido-N(1)-(5-O-phospho-beta-D-ribosyl)acetamidine + ATP = 5-amino-1-(5-phospho-beta-D-ribosyl)imidazole + ADP + phosphate + H(+). It functions in the pathway purine metabolism; IMP biosynthesis via de novo pathway; 5-amino-1-(5-phospho-D-ribosyl)imidazole from N(2)-formyl-N(1)-(5-phospho-D-ribosyl)glycinamide: step 2/2. The polypeptide is Phosphoribosylformylglycinamidine cyclo-ligase (Thermococcus kodakarensis (strain ATCC BAA-918 / JCM 12380 / KOD1) (Pyrococcus kodakaraensis (strain KOD1))).